The sequence spans 336 residues: Flavonoid 4'-O-methyltransferase 5 (336 aa).

S-adenosyl-L-methionine-binding residues include tyrosine 140 and aspartate 203. Residue histidine 241 is the Proton acceptor of the active site.

Belongs to the class I-like SAM-binding methyltransferase superfamily. Cation-independent O-methyltransferase family. In terms of assembly, homodimer. Expressed in leaves.

The enzyme catalyses genkwanin + S-adenosyl-L-methionine = apigenin 4',7-dimethyl ether + S-adenosyl-L-homocysteine. It carries out the reaction cirsiliol + S-adenosyl-L-methionine = eupatorin + S-adenosyl-L-homocysteine + H(+). The catalysed reaction is cirsimaritin + S-adenosyl-L-methionine = salvigenin + S-adenosyl-L-homocysteine + H(+). It catalyses the reaction scutellarein 7-methyl ether + S-adenosyl-L-methionine = ladanein + S-adenosyl-L-homocysteine + H(+). The enzyme catalyses (2S)-sakuranetin + S-adenosyl-L-methionine = (2S)-naringenin 4',7-dimethyl ether + S-adenosyl-L-homocysteine + H(+). It participates in flavonoid metabolism. Its activity is regulated as follows. Substrate inhibition by genkwanin (GENK) at concentrations above 10 mM. In terms of biological role, flavonoid 4'-O-methyltransferase involved in the biosynthesis of polymethoxylated flavonoids natural products such as nevadensin and salvigenin, aroma compounds which contribute to the flavor of sweet basil, and exhibit pharmacological activities such as anti-allergic, anti-oxidant, antibacterial, anti-proliferative, and anti-inflammatory effects. Catalyzes S-adenosylmethionine-dependent regioselective 4'-O-methylation of flavonoids; active on various hydroxylated flavonoid substrates, including scutellarein-7-methyl ether (SCU7Me) and, with a lower efficiency, cirsimaritin (CIRM), sakuranetin (NAR7Me), ladanein (LAD) and genkwanin (GENK). The sequence is that of Flavonoid 4'-O-methyltransferase 5 from Ocimum basilicum (Sweet basil).